A 164-amino-acid chain; its full sequence is FMN reductase (NADH) RutF (164 aa).

Belongs to the non-flavoprotein flavin reductase family. RutF subfamily.

The catalysed reaction is FMNH2 + NAD(+) = FMN + NADH + 2 H(+). Catalyzes the reduction of FMN to FMNH2 which is used to reduce pyrimidine by RutA via the Rut pathway. The polypeptide is FMN reductase (NADH) RutF (Escherichia coli O127:H6 (strain E2348/69 / EPEC)).